We begin with the raw amino-acid sequence, 362 residues long: Stress response regulator protein 1 (362 aa).

Disordered regions lie at residues 1–39 (MTRLTRPMVRSPISLPSTPSQLLHSASLSSSPSSPSLVQ) and 163–188 (TLKSTVSTSTSTSTSTSTGTNTETKT). The span at 19–39 (PSQLLHSASLSSSPSSPSLVQ) shows a compositional bias: low complexity. One can recognise a Response regulatory domain in the interval 209 to 327 (KFLLVDDNLI…LDFMANVIDE (119 aa)). Asp260 bears the 4-aspartylphosphate mark.

Functionally, required for stress adaptation, morphogenesis and virulence. This Lodderomyces elongisporus (strain ATCC 11503 / CBS 2605 / JCM 1781 / NBRC 1676 / NRRL YB-4239) (Yeast) protein is Stress response regulator protein 1 (SRR1).